Consider the following 382-residue polypeptide: Probable dual-specificity RNA methyltransferase RlmN (382 aa).

Glutamate 118 acts as the Proton acceptor in catalysis. Residues 124-370 (YDKRVTMCIS…TTVRDTRGSD (247 aa)) form the Radical SAM core domain. Cysteine 131 and cysteine 375 are oxidised to a cystine. Residues cysteine 138, cysteine 142, and cysteine 145 each contribute to the [4Fe-4S] cluster site. S-adenosyl-L-methionine is bound by residues 196-197 (GE), serine 230, 253-255 (SLH), and asparagine 332. The active-site S-methylcysteine intermediate is cysteine 375.

This sequence belongs to the radical SAM superfamily. RlmN family. [4Fe-4S] cluster serves as cofactor.

The protein resides in the cytoplasm. The catalysed reaction is adenosine(2503) in 23S rRNA + 2 reduced [2Fe-2S]-[ferredoxin] + 2 S-adenosyl-L-methionine = 2-methyladenosine(2503) in 23S rRNA + 5'-deoxyadenosine + L-methionine + 2 oxidized [2Fe-2S]-[ferredoxin] + S-adenosyl-L-homocysteine. The enzyme catalyses adenosine(37) in tRNA + 2 reduced [2Fe-2S]-[ferredoxin] + 2 S-adenosyl-L-methionine = 2-methyladenosine(37) in tRNA + 5'-deoxyadenosine + L-methionine + 2 oxidized [2Fe-2S]-[ferredoxin] + S-adenosyl-L-homocysteine. In terms of biological role, specifically methylates position 2 of adenine 2503 in 23S rRNA and position 2 of adenine 37 in tRNAs. The polypeptide is Probable dual-specificity RNA methyltransferase RlmN (Kocuria rhizophila (strain ATCC 9341 / DSM 348 / NBRC 103217 / DC2201)).